Consider the following 70-residue polypeptide: uncharacterized protein (70 aa).

This is an uncharacterized protein from Escherichia coli O157:H7.